The sequence spans 160 residues: Ribonuclease H (160 aa).

The 142-residue stretch at 5 to 146 (PGGLVEIWTD…VDQLATAARE (142 aa)) folds into the RNase H type-1 domain. Residues Asp14, Glu52, Asp74, and Asp138 each contribute to the Mg(2+) site.

The protein belongs to the RNase H family. Monomer. Mg(2+) is required as a cofactor.

It is found in the cytoplasm. It carries out the reaction Endonucleolytic cleavage to 5'-phosphomonoester.. Its function is as follows. Endonuclease that specifically degrades the RNA of RNA-DNA hybrids. This is Ribonuclease H from Acidiphilium cryptum (strain JF-5).